The chain runs to 561 residues: Membrane protein insertase YidC (561 aa).

A run of 6 helical transmembrane segments spans residues 7-27 (ILIV…NQDY), 342-362 (LELT…FWLL), 368-388 (LLGN…GLFF), 438-458 (LGGC…YWVL), 469-489 (WMLW…PIIM), and 516-536 (PIIF…YWVV).

It belongs to the OXA1/ALB3/YidC family. Type 1 subfamily. As to quaternary structure, interacts with the Sec translocase complex via SecD. Specifically interacts with transmembrane segments of nascent integral membrane proteins during membrane integration.

Its subcellular location is the cell inner membrane. Required for the insertion and/or proper folding and/or complex formation of integral membrane proteins into the membrane. Involved in integration of membrane proteins that insert both dependently and independently of the Sec translocase complex, as well as at least some lipoproteins. Aids folding of multispanning membrane proteins. The sequence is that of Membrane protein insertase YidC from Pseudomonas entomophila (strain L48).